A 197-amino-acid polypeptide reads, in one-letter code: Probable chorismate pyruvate-lyase (197 aa).

R77, L115, and E176 together coordinate substrate.

The protein belongs to the UbiC family.

It localises to the cytoplasm. The catalysed reaction is chorismate = 4-hydroxybenzoate + pyruvate. Its pathway is cofactor biosynthesis; ubiquinone biosynthesis. Functionally, removes the pyruvyl group from chorismate, with concomitant aromatization of the ring, to provide 4-hydroxybenzoate (4HB) for the ubiquinone pathway. This is Probable chorismate pyruvate-lyase from Burkholderia ambifaria (strain ATCC BAA-244 / DSM 16087 / CCUG 44356 / LMG 19182 / AMMD) (Burkholderia cepacia (strain AMMD)).